A 574-amino-acid polypeptide reads, in one-letter code: Glycine--tRNA ligase (574 aa).

2 residues coordinate substrate: arginine 96 and glutamate 162. ATP is bound by residues 194–196 (RNE), 204–209 (IRLREF), 327–328 (EC), and 450–453 (GIDR). 209 to 213 (FTQAE) is a substrate binding site. Position 446–450 (446–450 (EPSYG)) interacts with substrate.

It belongs to the class-II aminoacyl-tRNA synthetase family.

The protein resides in the cytoplasm. The catalysed reaction is tRNA(Gly) + glycine + ATP = glycyl-tRNA(Gly) + AMP + diphosphate. In terms of biological role, catalyzes the attachment of glycine to tRNA(Gly). The protein is Glycine--tRNA ligase of Methanococcus maripaludis (strain C6 / ATCC BAA-1332).